Reading from the N-terminus, the 623-residue chain is uncharacterized protein (623 aa).

The stretch at 24–51 (RALVQKDELAQASQDVEDMRDCYDSLLN) forms a coiled coil. Disordered regions lie at residues 148-170 (TRQR…QQLQ), 240-343 (FSGL…TTPP), 362-393 (ALPT…TKAI), 454-531 (SFSG…LGYS), and 585-607 (KKLG…PQAL). Over residues 243 to 259 (LEDDDGDDEIENNENDG) the composition is skewed to acidic residues. The segment covering 328–343 (VSQSAPLFPENRTTPP) has biased composition (polar residues). Residues 364–379 (PTPVETTRSPSSTTSP) show a composition bias toward low complexity. The span at 384–393 (VGSSNPTKAI) shows a compositional bias: polar residues. Low complexity predominate over residues 484–495 (PVSKLPKVSSSP). The segment covering 496-506 (TASPTFVSTPK) has biased composition (polar residues). The segment covering 590 to 606 (PSPPLTPMSLIHPPPQA) has biased composition (pro residues).

This is an uncharacterized protein from Arabidopsis thaliana (Mouse-ear cress).